A 199-amino-acid chain; its full sequence is Adenine phosphoribosyltransferase (199 aa).

This sequence belongs to the purine/pyrimidine phosphoribosyltransferase family. Homodimer.

The protein resides in the cytoplasm. The catalysed reaction is AMP + diphosphate = 5-phospho-alpha-D-ribose 1-diphosphate + adenine. The protein operates within purine metabolism; AMP biosynthesis via salvage pathway; AMP from adenine: step 1/1. Its function is as follows. Catalyzes a salvage reaction resulting in the formation of AMP, that is energically less costly than de novo synthesis. In Rhodopseudomonas palustris (strain BisB18), this protein is Adenine phosphoribosyltransferase.